The chain runs to 82 residues: Escargot/snail protein homolog (82 aa).

4 consecutive C2H2-type zinc fingers follow at residues 1 to 5 (HQQFH), 18 to 40 (FSCK…IRTH), 44 to 66 (CKCP…IRTH), and 72 to 82 (FSCQHCQSAFV).

The protein belongs to the snail C2H2-type zinc-finger protein family.

The protein localises to the nucleus. The chain is Escargot/snail protein homolog from Calliphora vicina (Blue blowfly).